We begin with the raw amino-acid sequence, 344 residues long: MVKVGIFGATGYTGVELIRILSKHEKVEIKYLSSQSYNTIAISNVYSSLLGFCDKVLEEVDFERAMSECDVIFTALPSGHAAKIAREAVKKGIKVIDLGADFRFDDYSIYKEWYSGEYDGYDGIKRVYGLPEIYRDDIKEAQVVGNPGCYPTSVILGLMPLLKNGIIEGKIIVDSKSGVSGAGRSPSQNNMYAECNENIKAYNVAKHRHIPEMEQELSKIFGETVSVVFTPHLAPMTRGILSTMYCKLKKDIDVDTVYDIYADFYKKEYFIKVLEPGHYPATKSVYGSNFCHIGFEVDKRTNTLIVMSAIDNLVKGASGQAVQNMNIMFGIDENTGLDIVPIYP.

Cys-149 is an active-site residue.

The protein belongs to the NAGSA dehydrogenase family. Type 1 subfamily.

Its subcellular location is the cytoplasm. It carries out the reaction N-acetyl-L-glutamate 5-semialdehyde + phosphate + NADP(+) = N-acetyl-L-glutamyl 5-phosphate + NADPH + H(+). It participates in amino-acid biosynthesis; L-arginine biosynthesis; N(2)-acetyl-L-ornithine from L-glutamate: step 3/4. Its function is as follows. Catalyzes the NADPH-dependent reduction of N-acetyl-5-glutamyl phosphate to yield N-acetyl-L-glutamate 5-semialdehyde. The sequence is that of N-acetyl-gamma-glutamyl-phosphate reductase from Thermoanaerobacter sp. (strain X514).